Reading from the N-terminus, the 319-residue chain is UDP-N-acetylenolpyruvoylglucosamine reductase (319 aa).

Residues 35-198 enclose the FAD-binding PCMH-type domain; that stretch reads VGGPAEAMFK…TGCVLAGRPD (164 aa). The active site involves R178. The active-site Proton donor is the S227. E302 is a catalytic residue.

Belongs to the MurB family. The cofactor is FAD.

The protein localises to the cytoplasm. The catalysed reaction is UDP-N-acetyl-alpha-D-muramate + NADP(+) = UDP-N-acetyl-3-O-(1-carboxyvinyl)-alpha-D-glucosamine + NADPH + H(+). It participates in cell wall biogenesis; peptidoglycan biosynthesis. In terms of biological role, cell wall formation. This Rhodospirillum rubrum (strain ATCC 11170 / ATH 1.1.1 / DSM 467 / LMG 4362 / NCIMB 8255 / S1) protein is UDP-N-acetylenolpyruvoylglucosamine reductase.